The sequence spans 1872 residues: Plexin-A3 (1872 aa).

The N-terminal stretch at 1–19 is a signal peptide; sequence MPTVCLLPLLFFTIGGCLG. The Sema domain maps to 20–489; the sequence is SSRPFRTFVV…SEKQVSQLPV (470 aa). At 20–1220 the chain is on the extracellular side; the sequence is SSRPFRTFVV…ITADRALTLP (1201 aa). A glycan (N-linked (GlcNAc...) asparagine) is linked at Asn60. Disulfide bonds link Cys78–Cys87, Cys113–Cys121, Cys267–Cys388, Cys283–Cys339, Cys357–Cys376, Cys492–Cys509, Cys498–Cys540, Cys501–Cys518, and Cys512–Cys524. N-linked (GlcNAc...) asparagine glycosylation is present at Asn549. Residues Cys575 and Cys595 are joined by a disulfide bond. 4 IPT/TIG domains span residues 841–934, 936–1021, 1024–1123, and 1126–1212; these read PRIT…YSFV, PTFD…YTYT, PTVT…FTYY, and PSFE…LHIT. Asn1163 carries an N-linked (GlcNAc...) asparagine glycan. A helical transmembrane segment spans residues 1221–1241; it reads AMVGLAAGGGLLLLAITVVLV. Residues 1240–1294 are a coiled coil; it reads LVAYKRKTQDADRTLKRLQLQMDNLESRVALECKEAFAELQTDINELTNHMDGVQ. Residues 1242–1872 lie on the Cytoplasmic side of the membrane; that stretch reads AYKRKTQDAD…QIITLVSSSS (631 aa). At Ser1597 the chain carries Phosphoserine.

The protein belongs to the plexin family. In terms of tissue distribution, detected in embryonic hindbrain, spinal cord, dorsal root ganglion, trigeminal ganglion and superior cervical ganglion. In newborns, detected throughout all layers of the hippocampus.

It is found in the cell membrane. Functionally, coreceptor for SEMA3A and SEMA3F. Necessary for signaling by class 3 semaphorins and subsequent remodeling of the cytoskeleton. Plays a role in axon guidance in the developing nervous system. Regulates the migration of sympathetic neurons, but not of neural crest precursors. Required for normal dendrite spine morphology in pyramidal neurons. May play a role in regulating semaphorin-mediated programmed cell death in the developing nervous system. Class 3 semaphorins bind to a complex composed of a neuropilin and a plexin. The plexin modulates the affinity of the complex for specific semaphorins, and its cytoplasmic domain is required for the activation of down-stream signaling events in the cytoplasm. This chain is Plexin-A3 (Plxna3), found in Mus musculus (Mouse).